A 177-amino-acid chain; its full sequence is Large ribosomal subunit protein uL10 (177 aa).

It belongs to the universal ribosomal protein uL10 family. In terms of assembly, part of the ribosomal stalk of the 50S ribosomal subunit. The N-terminus interacts with L11 and the large rRNA to form the base of the stalk. The C-terminus forms an elongated spine to which L12 dimers bind in a sequential fashion forming a multimeric L10(L12)X complex.

Forms part of the ribosomal stalk, playing a central role in the interaction of the ribosome with GTP-bound translation factors. This Legionella pneumophila (strain Corby) protein is Large ribosomal subunit protein uL10.